A 78-amino-acid polypeptide reads, in one-letter code: uncharacterized protein (78 aa).

2 helical membrane-spanning segments follow: residues 5–24 and 39–61; these read LALL…IKLM and LWLQ…AGFI.

The protein localises to the cell membrane. This is an uncharacterized protein from Bacillus subtilis (strain 168).